We begin with the raw amino-acid sequence, 330 residues long: MPRSFLVKSKKAHTYHQPRAQGDELVWPPAVIPVAKEHSQSASPLLSTPLPSQTLDWNTIKQEREMLLNQSLPKMASAPEGPLVTPQPQDGESPLSESPPFYKPSFSWDTLASSYSHSYTQTPSTMQSAFLERSVRLYGSPLVPSTESPLDFRLRYSPGMDTYHCVKCNKVFSTPHGLEVHVRRSHSGTRPFACDVCGKTFGHAVSLEQHTHVHSQERSFECRMCGKAFKRSSTLSTHLLIHSDTRPYPCQFCGKRFHQKSDMKKHTYIHTGEKPHKCQVCGKAFSQSSNLITHSRKHTGFKPFSCELCTKGFQRKVDLRRHRESQHNLK.

Residues 1–20 form an SNAG domain region; it reads MPRSFLVKSKKAHTYHQPRA. 2 disordered regions span residues 1–21 and 75–99; these read MPRS…PRAQ and MASA…SESP. At K8 the chain carries N6,N6-dimethyllysine. The tract at residues 91 to 330 is interaction with ARIH2; sequence GESPLSESPP…RHRESQHNLK (240 aa). C2H2-type zinc fingers lie at residues 163-186, 192-214, 220-242, 248-270, 276-298, and 304-327; these read YHCV…RRSH, FACD…THVH, FECR…LLIH, YPCQ…TYIH, HKCQ…SRKH, and FSCE…ESQH. Residues 164-330 are mediates interaction with GATA1; that stretch reads HCVKCNKVFS…RHRESQHNLK (167 aa).

Interacts with histone methyltransferases EHMT2 and SUV39H1. Interacts with ARIH2 (via RING-type 2) and with RUNX1T1. Forms a complex with GATA1. Component of a RCOR-GFI-KDM1A-HDAC complex. Interacts directly with RCOR1, KDM1A and HDAC2. Methylation at Lys-8 in the SNAG domain seems required for the recruitment of the corepressor complex. In terms of tissue distribution, expressed in bone marrow and in spleen. Detected in hematopoietic stem cells, erythroblasts, and megakaryocytes. Expressed in thymocytes.

It localises to the nucleus. Essential proto-oncogenic transcriptional regulator necessary for development and differentiation of erythroid and megakaryocytic lineages. Component of a RCOR-GFI-KDM1A-HDAC complex that suppresses, via histone deacetylase (HDAC) recruitment, a number of genes implicated in multilineage blood cell development and controls hematopoietic differentiation. Transcriptional repressor or activator depending on both promoter and cell type context; represses promoter activity of SOCS1 and SOCS3 and thus, may regulate cytokine signaling pathways. Cooperates with GATA1 to repress target gene transcription, such as the apoptosis regulator BCL2L1; GFI1B silencing in leukemic cell lines markedly increase apoptosis rate. Inhibits down-regulation of MYC and MYB as well as the cyclin-dependent kinase inhibitor CDKN1A/P21WAF1 in IL6-treated myelomonocytic cells. Represses expression of GATA3 in T-cell lymphomas and inhibits GATA1-mediated transcription; as GATA1 also mediates erythroid GFI1B transcription, both GATA1 and GFI1B participate in a feedback regulatory pathway controlling the expression of GFI1B gene in erythroid cells. Suppresses GATA1-mediated stimulation of GFI1B promoter through protein interaction. Binds to gamma-satellite DNA and to its own promoter, auto-repressing its own expression. Alters histone methylation by recruiting histone methyltransferase to target genes promoters. Plays a role in heterochromatin formation. The polypeptide is Zinc finger protein Gfi-1b (Gfi1b) (Mus musculus (Mouse)).